Here is a 513-residue protein sequence, read N- to C-terminus: Cytochrome P450 4p1 (513 aa).

Heme is bound by residues Glu320 and Cys459.

The protein belongs to the cytochrome P450 family. Heme is required as a cofactor.

The protein resides in the endoplasmic reticulum membrane. The protein localises to the microsome membrane. In terms of biological role, may be involved in the metabolism of insect hormones and in the breakdown of synthetic insecticides. In Drosophila melanogaster (Fruit fly), this protein is Cytochrome P450 4p1 (Cyp4p1).